A 489-amino-acid chain; its full sequence is Rhamnulokinase (489 aa).

Position 13-17 (13-17) interacts with ATP; the sequence is ASSGR. Cysteines 68 and 222 form a disulfide. Substrate-binding positions include Gly83 and 236–238; that span reads HDT. Catalysis depends on Asp237, which acts as the Proton acceptor. An ATP-binding site is contributed by Thr259. Asn296 lines the substrate pocket. Gln304 is an ATP binding site. The cysteines at positions 353 and 370 are disulfide-linked. Gly402 is an ATP binding site. Cys413 and Cys417 are oxidised to a cystine.

Belongs to the rhamnulokinase family. In terms of assembly, monomer. Requires Mg(2+) as cofactor.

It catalyses the reaction L-rhamnulose + ATP = L-rhamnulose 1-phosphate + ADP + H(+). The protein operates within carbohydrate degradation; L-rhamnose degradation; glycerone phosphate from L-rhamnose: step 2/3. Involved in the catabolism of L-rhamnose (6-deoxy-L-mannose). Catalyzes the transfer of the gamma-phosphate group from ATP to the 1-hydroxyl group of L-rhamnulose to yield L-rhamnulose 1-phosphate. This Escherichia coli O17:K52:H18 (strain UMN026 / ExPEC) protein is Rhamnulokinase.